Consider the following 478-residue polypeptide: Proton-coupled amino acid transporter 2 (478 aa).

2 stretches are compositionally biased toward polar residues: residues 1–14 and 26–37; these read MSVT…QVAT and KLQSQDPSPANG. The tract at residues 1–46 is disordered; sequence MSVTKSARSPQVATPLNLDLPESAKKLQSQDPSPANGSSSESSKKT. Over 1–53 the chain is Cytoplasmic; that stretch reads MSVTKSARSPQVATPLNLDLPESAKKLQSQDPSPANGSSSESSKKTKGITGFQ. Residues 54 to 74 form a helical membrane-spanning segment; that stretch reads TLVHLVKGNMGTGILGLPLAV. Topologically, residues 75-76 are extracellular; sequence KN. Residues 77-97 traverse the membrane as a helical segment; the sequence is AGILMGPLSLLVMGLIACHCM. Topologically, residues 98 to 143 are cytoplasmic; it reads HILVRCAQRFCHRLNKPFMDYGDTVMHGLAFSPNAWLQNHAHWGRR. A helical transmembrane segment spans residues 144–164; the sequence is VVSFFLIVTQLGFCCVYIVFL. Residues 165 to 192 lie on the Extracellular side of the membrane; it reads ADNLKQVVEAVNSTTISCHKNETVVLTP. The helical transmembrane segment at 193–213 threads the bilayer; that stretch reads TMDSRLYMLSFLPVLGLLVFV. The Cytoplasmic segment spans residues 214–217; that stretch reads RNLR. The chain crosses the membrane as a helical span at residues 218–238; the sequence is VLTIFSLLANISMLVSLVIIA. Topologically, residues 239–259 are extracellular; sequence QYIIQEIPDASQLPLVASWKT. Residues 260–280 traverse the membrane as a helical segment; it reads YPLFFGTAIFSFESIGVVLPL. At 281-292 the chain is on the cytoplasmic side; sequence ENKMKDARGFPT. The helical transmembrane segment at 293 to 313 threads the bilayer; that stretch reads ILSLGMSIITTLYIAIGALGY. Residues 314-340 lie on the Extracellular side of the membrane; that stretch reads LRFGDDIKASITLNLPNCWLYQSVKLL. Residues 341–361 form a helical membrane-spanning segment; the sequence is YVVGILCTYALQFYVPAEIII. Residues 362 to 374 are Cytoplasmic-facing; sequence PLAVSQVSKRWAL. The helical transmembrane segment at 375–395 threads the bilayer; the sequence is PVDLSIRLALVCLTCMLAILI. Over 396–399 the chain is Extracellular; that stretch reads PRLD. Residues 400 to 420 traverse the membrane as a helical segment; sequence LVLSLVGSVSSSALALIIPPL. Residues 421–441 lie on the Cytoplasmic side of the membrane; it reads LEVVTYYGEGISPLTVTKDAL. The chain crosses the membrane as a helical span at residues 442-462; that stretch reads ISILGFMGFVVGTYQALDELI. Residues 463 to 478 lie on the Extracellular side of the membrane; it reads KSGNSPALSNSTMFIQ.

This sequence belongs to the amino acid/polyamine transporter 2 family. In terms of tissue distribution, expressed in spinal cord, brain, testis, lung, heart, colon, spleen, kidney and muscle. Found in neuronal cell bodies in the anterior horn, in spinal cord brain stem, cerebellum, hippocampus, hypothalamus, rhinencephalon, cerebral cortex, and olfactory bulb in the brain. Also expressed in bone and fat tissues.

It localises to the cell membrane. Its subcellular location is the endoplasmic reticulum membrane. The protein localises to the recycling endosome membrane. The enzyme catalyses glycine(in) + H(+)(in) = glycine(out) + H(+)(out). It carries out the reaction L-alanine(in) + H(+)(in) = L-alanine(out) + H(+)(out). It catalyses the reaction D-alanine(in) + H(+)(in) = D-alanine(out) + H(+)(out). The catalysed reaction is L-proline(out) + H(+)(out) = L-proline(in) + H(+)(in). The enzyme catalyses D-proline(out) + H(+)(out) = D-proline(in) + H(+)(in). It carries out the reaction 4-hydroxy-L-proline(in) + H(+)(in) = 4-hydroxy-L-proline(out) + H(+)(out). It catalyses the reaction L-serine(in) + H(+)(in) = L-serine(out) + H(+)(out). The catalysed reaction is D-serine(out) + H(+)(out) = D-serine(in) + H(+)(in). The enzyme catalyses beta-alanine(in) + H(+)(in) = beta-alanine(out) + H(+)(out). It carries out the reaction 4-aminobutanoate(in) + H(+)(in) = 4-aminobutanoate(out) + H(+)(out). It catalyses the reaction sarcosine(in) + H(+)(in) = sarcosine(out) + H(+)(out). The catalysed reaction is N,N-dimethylglycine(in) + H(+)(in) = N,N-dimethylglycine(out) + H(+)(out). Electrogenic proton/amino acid symporter with a high selectivity for the small side chains amino acids glycine, alanine and proline, where both L- and D-enantiomers are transported. Extension of the backbone length, as in beta-alanine and 4-aminobutanoate or methylation of the amino group, as in sarcosine and N,N-dimethylglycine, are also tolerated but decrease transport efficiency. A free carboxyl group is preferred. The chain is Proton-coupled amino acid transporter 2 from Mus musculus (Mouse).